Consider the following 284-residue polypeptide: 2-dehydro-3-deoxyphosphooctonate aldolase (284 aa).

The protein belongs to the KdsA family.

Its subcellular location is the cytoplasm. The enzyme catalyses D-arabinose 5-phosphate + phosphoenolpyruvate + H2O = 3-deoxy-alpha-D-manno-2-octulosonate-8-phosphate + phosphate. It functions in the pathway carbohydrate biosynthesis; 3-deoxy-D-manno-octulosonate biosynthesis; 3-deoxy-D-manno-octulosonate from D-ribulose 5-phosphate: step 2/3. It participates in bacterial outer membrane biogenesis; lipopolysaccharide biosynthesis. The chain is 2-dehydro-3-deoxyphosphooctonate aldolase from Yersinia enterocolitica serotype O:8 / biotype 1B (strain NCTC 13174 / 8081).